The sequence spans 282 residues: NADPH-dependent 7-cyano-7-deazaguanine reductase (282 aa).

88–90 (IES) contributes to the substrate binding site. 90 to 91 (SK) is an NADPH binding site. Cysteine 190 (thioimide intermediate) is an active-site residue. Aspartate 197 (proton donor) is an active-site residue. 229–230 (HE) contacts substrate. 258–259 (RG) is an NADPH binding site.

It belongs to the GTP cyclohydrolase I family. QueF type 2 subfamily. Homodimer.

The protein resides in the cytoplasm. The enzyme catalyses 7-aminomethyl-7-carbaguanine + 2 NADP(+) = 7-cyano-7-deazaguanine + 2 NADPH + 3 H(+). Its pathway is tRNA modification; tRNA-queuosine biosynthesis. In terms of biological role, catalyzes the NADPH-dependent reduction of 7-cyano-7-deazaguanine (preQ0) to 7-aminomethyl-7-deazaguanine (preQ1). The polypeptide is NADPH-dependent 7-cyano-7-deazaguanine reductase (Citrobacter koseri (strain ATCC BAA-895 / CDC 4225-83 / SGSC4696)).